The chain runs to 233 residues: Large ribosomal subunit protein uL1 (233 aa).

Belongs to the universal ribosomal protein uL1 family. Part of the 50S ribosomal subunit.

Its function is as follows. Binds directly to 23S rRNA. The L1 stalk is quite mobile in the ribosome, and is involved in E site tRNA release. Functionally, protein L1 is also a translational repressor protein, it controls the translation of the L11 operon by binding to its mRNA. The polypeptide is Large ribosomal subunit protein uL1 (Deinococcus deserti (strain DSM 17065 / CIP 109153 / LMG 22923 / VCD115)).